The chain runs to 176 residues: MNIKSLIRTIPDYPKPGIQFRDITTLLKDASGLRQVVDALVERYAGAKVDKVVGIESRGFIVGAAVAYELGVGFVPVRKKGKLPGDVLGHDYALEYGTDRVEIHSDAISPDEHVLLLDDLIATGGTAEAAAILIEKLGGHVLECAFIIGLPDLGGERKLRVLGYKTFSLCQFEDSE.

The protein belongs to the purine/pyrimidine phosphoribosyltransferase family. In terms of assembly, homodimer.

The protein resides in the cytoplasm. The enzyme catalyses AMP + diphosphate = 5-phospho-alpha-D-ribose 1-diphosphate + adenine. Its pathway is purine metabolism; AMP biosynthesis via salvage pathway; AMP from adenine: step 1/1. In terms of biological role, catalyzes a salvage reaction resulting in the formation of AMP, that is energically less costly than de novo synthesis. The protein is Adenine phosphoribosyltransferase of Methylobacillus flagellatus (strain ATCC 51484 / DSM 6875 / VKM B-1610 / KT).